A 149-amino-acid polypeptide reads, in one-letter code: Calmodulin-1 (149 aa).

Residue Ala2 is modified to N-acetylalanine. EF-hand domains lie at 8–43 (DQIA…LGQN), 44–79 (PTEA…KMKD), 81–116 (DSEE…LGEK), and 117–149 (LTDE…MMAK). 14 residues coordinate Ca(2+): Asp21, Asp23, Asp25, Cys27, Glu32, Asp57, Asp59, Asn61, Thr63, Glu68, Asp94, Asp96, Asn98, and Glu105. Lys116 carries the N6,N6,N6-trimethyllysine modification. Ca(2+)-binding residues include Asp130, Asp132, Asp134, Gln136, and Glu141.

Belongs to the calmodulin family.

In terms of biological role, calmodulin mediates the control of a large number of enzymes, ion channels and other proteins by Ca(2+). Among the enzymes to be stimulated by the calmodulin-Ca(2+) complex are a number of protein kinases and phosphatases. This Oryza sativa subsp. indica (Rice) protein is Calmodulin-1 (CAM1-1).